The primary structure comprises 178 residues: dCTP deaminase (178 aa).

DCTP is bound by residues 99–104 (RSTWAR) and Asp115. The Proton donor/acceptor role is filled by Glu125. The dCTP site is built by Tyr157 and Gln164.

The protein belongs to the dCTP deaminase family. In terms of assembly, homotrimer.

It catalyses the reaction dCTP + H2O + H(+) = dUTP + NH4(+). The protein operates within pyrimidine metabolism; dUMP biosynthesis; dUMP from dCTP (dUTP route): step 1/2. Functionally, catalyzes the deamination of dCTP to dUTP. This chain is dCTP deaminase, found in Aeropyrum pernix (strain ATCC 700893 / DSM 11879 / JCM 9820 / NBRC 100138 / K1).